Here is a 73-residue protein sequence, read N- to C-terminus: UPF0435 protein BH2488 (73 aa).

It belongs to the UPF0435 family.

The chain is UPF0435 protein BH2488 from Halalkalibacterium halodurans (strain ATCC BAA-125 / DSM 18197 / FERM 7344 / JCM 9153 / C-125) (Bacillus halodurans).